The following is an 881-amino-acid chain: Valine--tRNA ligase (881 aa).

Positions 49–59 (PNVTGKLHLGH) match the 'HIGH' region motif. A 'KMSKS' region motif is present at residues 526-530 (KMSKS). Lys-529 provides a ligand contact to ATP. Positions 810–881 (LADLINLDEE…VRQRLADLEK (72 aa)) form a coiled coil.

This sequence belongs to the class-I aminoacyl-tRNA synthetase family. ValS type 1 subfamily. In terms of assembly, monomer.

Its subcellular location is the cytoplasm. It catalyses the reaction tRNA(Val) + L-valine + ATP = L-valyl-tRNA(Val) + AMP + diphosphate. Functionally, catalyzes the attachment of valine to tRNA(Val). As ValRS can inadvertently accommodate and process structurally similar amino acids such as threonine, to avoid such errors, it has a 'posttransfer' editing activity that hydrolyzes mischarged Thr-tRNA(Val) in a tRNA-dependent manner. The protein is Valine--tRNA ligase of Bacillus anthracis.